The sequence spans 250 residues: uncharacterized protein (250 aa).

Belongs to the glycosyltransferase 2 family.

This is an uncharacterized protein from Haemophilus influenzae (strain ATCC 51907 / DSM 11121 / KW20 / Rd).